The primary structure comprises 23 residues: Potassium channel toxin kappa-KTx 2.3 (23 aa).

2 disulfide bridges follow: Cys-4-Cys-22 and Cys-8-Cys-18.

Belongs to the short scorpion toxin superfamily. Potassium channel inhibitor kappa-KTx family. Kappa-KTx 2 subfamily. In terms of tissue distribution, expressed by the venom gland.

The protein resides in the secreted. Decreases the amplitude of the potassium current of the rat channels Kv1.1/KCNA1 by 33% and Kv1.2/KCNA2 by 8% as well as human Kv1.3/KCNA3 by 70%. In Opisthacanthus madagascariensis (Scorpion), this protein is Potassium channel toxin kappa-KTx 2.3.